A 445-amino-acid chain; its full sequence is 3-phosphoshikimate 1-carboxyvinyltransferase (445 aa).

A compositionally biased stretch (polar residues) spans 1–20 (MSSTHPGRTIRSGATQNLSG). A disordered region spans residues 1 to 24 (MSSTHPGRTIRSGATQNLSGTIRP). Lys-28, Ser-29, and Arg-33 together coordinate 3-phosphoshikimate. Lys-28 serves as a coordination point for phosphoenolpyruvate. The phosphoenolpyruvate site is built by Gly-101 and Arg-129. Ser-174, Gln-176, Asp-322, and Lys-349 together coordinate 3-phosphoshikimate. Residue Gln-176 coordinates phosphoenolpyruvate. The active-site Proton acceptor is the Asp-322. Phosphoenolpyruvate-binding residues include Arg-353 and Arg-397.

Belongs to the EPSP synthase family. Monomer.

Its subcellular location is the cytoplasm. It catalyses the reaction 3-phosphoshikimate + phosphoenolpyruvate = 5-O-(1-carboxyvinyl)-3-phosphoshikimate + phosphate. Its pathway is metabolic intermediate biosynthesis; chorismate biosynthesis; chorismate from D-erythrose 4-phosphate and phosphoenolpyruvate: step 6/7. Catalyzes the transfer of the enolpyruvyl moiety of phosphoenolpyruvate (PEP) to the 5-hydroxyl of shikimate-3-phosphate (S3P) to produce enolpyruvyl shikimate-3-phosphate and inorganic phosphate. This Magnetococcus marinus (strain ATCC BAA-1437 / JCM 17883 / MC-1) protein is 3-phosphoshikimate 1-carboxyvinyltransferase.